A 253-amino-acid chain; its full sequence is HTH-type transcriptional regulator YdeO (253 aa).

Residues 137 to 233 (GKVRNIVNMK…GNSPKRVSKE (97 aa)) enclose the HTH araC/xylS-type domain. DNA-binding regions (H-T-H motif) lie at residues 154 to 175 (KDICDCLYISESLLKKKLKQEQ) and 200 to 223 (VNKIAEQCGYASTSYFIYAFRKHF).

In terms of biological role, induces the expression of gadE and mdtEF. Could also regulate the expression of other genes involved in acid resistance. This Escherichia coli (strain K12) protein is HTH-type transcriptional regulator YdeO (ydeO).